Reading from the N-terminus, the 172-residue chain is Acetolactate synthase small subunit (172 aa).

Residues 4–78 (TLSVLVEDEA…NILKVDNITE (75 aa)) enclose the ACT domain.

Belongs to the acetolactate synthase small subunit family. Dimer of large and small chains.

Its subcellular location is the plastid. It is found in the chloroplast. The catalysed reaction is 2 pyruvate + H(+) = (2S)-2-acetolactate + CO2. Its pathway is amino-acid biosynthesis; L-isoleucine biosynthesis; L-isoleucine from 2-oxobutanoate: step 1/4. It functions in the pathway amino-acid biosynthesis; L-valine biosynthesis; L-valine from pyruvate: step 1/4. The chain is Acetolactate synthase small subunit (ilvH) from Cyanidium caldarium (Red alga).